Reading from the N-terminus, the 75-residue chain is Protein SlyX homolog (75 aa).

This sequence belongs to the SlyX family.

In Chromobacterium violaceum (strain ATCC 12472 / DSM 30191 / JCM 1249 / CCUG 213 / NBRC 12614 / NCIMB 9131 / NCTC 9757 / MK), this protein is Protein SlyX homolog.